A 911-amino-acid chain; its full sequence is Nitrate reductase [NADH] (911 aa).

Positions 1–10 are enriched in polar residues; sequence MAASVENRQY. A disordered region spans residues 1–71; the sequence is MAASVENRQY…SEDEDDDDEK (71 aa). Positions 61 to 71 are enriched in acidic residues; it reads SSEDEDDDDEK. C188 serves as a coordination point for Mo-molybdopterin. A Cytochrome b5 heme-binding domain is found at 536-611; that stretch reads SKMYSMSEVR…LEDFRIGELI (76 aa). 2 residues coordinate heme: H571 and H594. One can recognise an FAD-binding FR-type domain in the interval 654–766; sequence REKIPCKLVD…KGPLGHIEYQ (113 aa). FAD contacts are provided by residues 706–709, 723–727, F728, F735, 740–742, and T793; these read RAYT, VVKIY, and QMS.

It belongs to the nitrate reductase family. In terms of assembly, homodimer. FAD is required as a cofactor. Requires heme as cofactor. Mo-molybdopterin serves as cofactor.

The enzyme catalyses nitrite + NAD(+) + H2O = nitrate + NADH + H(+). Nitrate reductase is a key enzyme involved in the first step of nitrate assimilation in plants, fungi and bacteria. The polypeptide is Nitrate reductase [NADH] (NIA) (Solanum lycopersicum (Tomato)).